Reading from the N-terminus, the 1060-residue chain is MKGSRTITATPEGSPEAVDLSLIGLPPPMSQRPGSASATRSIFRSMSVATGSEPRKKALEATGPGGPRAINNLRRSNSTTQVNQSWTGSPRPAEPTDFLMLFEGSTSGRRRVASLSKASSEKEATWNVLDEQPRGLALPASAQSPSTLDSALGPRRKECPLAPSFTANNRSNKGAVGNCVTTMVHNHYASSKMVSPPKSSNQTAPSLNNIVKAAAREGGEGSDLGKPRKNLSSASQSARGTTGLLRRREVTEEEAERFIHQVNQAAVTIQRWYRCQVQRRRAGAAALEHLLASKREGQRQRLGGGNLLELHRQEEAARKKAREEKARQARQAAIQVLQQKRAQKASEAEHRRPKDRPETRAPEQPRPMQEPGCVTHPKANNAGASIYPTGPADPCPPASESSPEQWQSPEDKPQDIHSQGEARQDLAVSGSSRGKARARATLDDLLDTLKLLEEEPEPLPHPKAYHKDRYAWTDEEEDANSLTADNLEKFGKLSAAPGPPDDGTLLSEAKLQSIMTFLDEMEKSGQERPAPWRESLVLEAGSGSEGSTSVMRLKLELEEKKQAMALLQRALAQQRDLTVRRVKETEKELTRQLRQQKEQYEATIQRHLSFIDQLIEDKKVLSEKCEAVVAELKHGDQRCRERVAQMQEQHELEIKKLKELMSATEKIRREKWINEKTKKIKEITVRGLEPEIQKLIAKHKQEVRRLRGLHEAELQQREEQAAQRHLRQAEELRQHLDREREVLGQQERERAQQRFEQHLEQEQRALEQQRRRLYNEVAEEKERLGQQAARQRAELEELRQQLEESSAALTRALRAEFERSREEQERRHQMELKALKDQLEAERQAWVASCAKKEEAWLLTRERELKEEIRKGRDQEIELVIHRLEADMTLAKEESERAAESRVKRVRDKYETELSELEQSERKLQERCSELKGRLGEAEGEKERLQSLVRQKEKELEDLRAVNTQMCSERASLAQVVRQEFAEQLAASQEETQRVKVELAELQARQQVELDEVHRRVKTALARKEAAVNSLRKQHEAAVKRADHLEELLEQHKGSSLSSK.

Polar residues predominate over residues Met1–Pro11. The segment at Met1–Thr96 is disordered. The segment at Met1–Leu244 is interaction with PLK4. Phosphoserine occurs at positions 14 and 35. Polar residues-rich tracts occupy residues Arg32–Thr50 and Leu73–Gly88. Ser47 carries the post-translational modification Phosphoserine; by MAPKAPK2. Residue Ser78 is modified to Phosphoserine; by MAPKAPK2 and PLK4. 5 positions are modified to phosphoserine: Ser89, Ser105, Ser114, Ser146, and Ser150. 2 disordered regions span residues Leu136–Arg155 and Glu217–Arg248. Basic and acidic residues predominate over residues Glu217 to Lys226. The region spanning Asn263–Gly283 is the IQ domain. Basic and acidic residues-rich tracts occupy residues Glu314–Arg327 and Lys344–Glu363. The disordered stretch occupies residues Glu314 to Arg437. A compositionally biased stretch (low complexity) spans Ala398–Ser408. Residues Pro409–Gln424 are compositionally biased toward basic and acidic residues. At Thr473 the chain carries Phosphothreonine. Ser481 is modified (phosphoserine).

It belongs to the CEP131 family. As to quaternary structure, self-associates. Associates with the centriolar satellite BBSome protein complex Interacts with BBS4; the interaction limits BBS4 availability for association with the BBSome complex, and hence negatively regulates ciliary localization of the BBSome complex. Interacts with MIB1. Interacts with PCM1; the interaction increases in response to ultraviolet light (UV) radiation. Associates with microtubule; association to microtubule is reduced in response to cellular stress, such as UV stimulation, in a process that requires p38 MAP kinase signaling. Interacts with CEP290, DCTN1, MAP1LC3B, PCNT, PCM1 and CEP152. Interacts with 14-3-3 proteins following UV-induced phosphorylation by MAPKAPK2; this inhibits formation of novel centriolar satellites. Interacts with SDCCAG8. Interacts with CCDC61. Interacts with PLK4. Ubiquitinated. Undergoes monoubiquitination catalyzed by the E3 ubiquitin-protein ligase MIB1 in proliferating cells, preventing cilia formation. Monoubiquitination by MIB1 is inhibited in response to cellular stress, such as ultraviolet light (UV) radiation or heat shock, resulting in ciliogenesis restoration. Post-translationally, MAPKAPK2-dependent phosphorylation at Ser-47 and Ser-78 occurs in response to cellular stress such as exposure to ultraviolet irradiation and promotes binding to 14-3-3 proteins which leads to cytoplasmic sequestration of CEP131 and blocks formation of new centriolar satellites. Phosphorylation at Ser-78 mediated by PLK4 is essential for proper organization and integrity of centriolar satellites but is dispensable for its localization to centrioles and its function in ciliogenesis. As to expression, localized to the pre-acrosome region of round and elongated spermatids in testis but also present in ovary, brain and adipose tissue.

Its subcellular location is the cytoplasm. It localises to the cytoskeleton. The protein resides in the microtubule organizing center. It is found in the centrosome. The protein localises to the centriolar satellite. Its subcellular location is the centriole. It localises to the cilium basal body. The protein resides in the cytoplasmic vesicle. It is found in the secretory vesicle. The protein localises to the acrosome. Its function is as follows. Component of centriolar satellites contributing to the building of a complex and dynamic network required to regulate cilia/flagellum formation. In proliferating cells, MIB1-mediated ubiquitination induces its sequestration within centriolar satellites, precluding untimely cilia formation initiation. In contrast, during normal and ultraviolet or heat shock cellular stress-induced ciliogenesis, its non-ubiquitinated form is rapidly displaced from centriolar satellites and recruited to centrosome/basal bodies in a microtubule- and p38 MAPK-dependent manner. Also acts as a negative regulator of BBSome ciliary trafficking. Plays a role in sperm flagellar formation; may be involved in the regulation of intraflagellar transport (IFT) and/or intramanchette (IMT) trafficking, which are important for axoneme extension and/or cargo delivery to the nascent sperm tail. Required for optimal cell proliferation and cell cycle progression; may play a role in the regulation of genome stability and centriole duplication in non-ciliogenic cells. Involved in centriole duplication. Required for CEP152, WDR62 and CEP63 centrosomal localization and promotes the centrosomal localization of CDK2. Essential for maintaining proper centriolar satellite integrity. The polypeptide is Centrosomal protein of 131 kDa (Cep131) (Mus musculus (Mouse)).